Reading from the N-terminus, the 540-residue chain is Putative rhamnogalacturonase (540 aa).

Positions Met1 to Ala23 are cleaved as a signal peptide. 2 disulfide bridges follow: Cys53/Cys100 and Cys192/Cys203. Residue Asn89 is glycosylated (N-linked (GlcNAc...) asparagine). Asn368 carries N-linked (GlcNAc...) asparagine glycosylation.

It belongs to the polysaccharide lyase 4 family.

The protein resides in the secreted. The enzyme catalyses Endotype eliminative cleavage of L-alpha-rhamnopyranosyl-(1-&gt;4)-alpha-D-galactopyranosyluronic acid bonds of rhamnogalacturonan I domains in ramified hairy regions of pectin leaving L-rhamnopyranose at the reducing end and 4-deoxy-4,5-unsaturated D-galactopyranosyluronic acid at the non-reducing end.. Its function is as follows. Could be a pectinolytic enzyme that hydrolyzes the alpha-L-rhamnopyranosyl-(1,4)-alpha-D-galacturonopyranosyl glycosidic linkage by beta-elimination, thereby generating oligosaccharides terminating at the non-reducing end with a hex-4-enopyranosyluronic acid residue. This chain is Putative rhamnogalacturonase (asd-1), found in Neurospora crassa (strain ATCC 24698 / 74-OR23-1A / CBS 708.71 / DSM 1257 / FGSC 987).